The following is a 422-amino-acid chain: Serine--tRNA ligase (422 aa).

Position 231–233 (231–233 (TSE)) interacts with L-serine. 262 to 264 (RQE) contacts ATP. E285 is an L-serine binding site. 349–352 (EISS) contributes to the ATP binding site. S384 lines the L-serine pocket.

The protein belongs to the class-II aminoacyl-tRNA synthetase family. Type-1 seryl-tRNA synthetase subfamily. In terms of assembly, homodimer. The tRNA molecule binds across the dimer.

The protein resides in the cytoplasm. The enzyme catalyses tRNA(Ser) + L-serine + ATP = L-seryl-tRNA(Ser) + AMP + diphosphate + H(+). The catalysed reaction is tRNA(Sec) + L-serine + ATP = L-seryl-tRNA(Sec) + AMP + diphosphate + H(+). The protein operates within aminoacyl-tRNA biosynthesis; selenocysteinyl-tRNA(Sec) biosynthesis; L-seryl-tRNA(Sec) from L-serine and tRNA(Sec): step 1/1. In terms of biological role, catalyzes the attachment of serine to tRNA(Ser). Is also able to aminoacylate tRNA(Sec) with serine, to form the misacylated tRNA L-seryl-tRNA(Sec), which will be further converted into selenocysteinyl-tRNA(Sec). The sequence is that of Serine--tRNA ligase from Mycoplasma capricolum subsp. capricolum (strain California kid / ATCC 27343 / NCTC 10154).